The primary structure comprises 246 residues: E3 ubiquitin ligase TRIM40 (246 aa).

The segment at 12 to 55 (CPICLDPLKEAVSTDCRHLFCRMCLTQHMDKASVSGILSCPVCR) adopts an RING-type zinc-finger fold. A B box-type zinc finger spans residues 64-105 (GDNYICHTHQKRVRRFCEASGHLLCEECLQSPEHQSHTELSI). Positions 69, 72, 91, and 97 each coordinate Zn(2+). A coiled-coil region spans residues 105 to 170 (IENAISHYKE…DQTKEQLKAL (66 aa)).

This sequence belongs to the TRIM/RBCC family. Interacts with NEDD8.

It catalyses the reaction S-ubiquitinyl-[E2 ubiquitin-conjugating enzyme]-L-cysteine + [acceptor protein]-L-lysine = [E2 ubiquitin-conjugating enzyme]-L-cysteine + N(6)-ubiquitinyl-[acceptor protein]-L-lysine.. Functionally, E3 ubiquitin-protein ligase that plays a role in the limitation of the innate immune response. Mediates inhibition of the RLR signaling pathway by ubiquitinating RIGI and IFIH1 receptors, leading to their proteasomal degradation. Also promotes the neddylation of IKBKG/NEMO, stabilizing NFKBIA, and thereby inhibiting of NF-kappa-B nuclear translocation and activation. The chain is E3 ubiquitin ligase TRIM40 (Trim40) from Mus musculus (Mouse).